Consider the following 923-residue polypeptide: Meiotic recombination protein rec11 (923 aa).

The SCD domain occupies 278 to 365; that stretch reads LFSRIHDIRA…DRFSLRIVEI (88 aa).

The polypeptide is Meiotic recombination protein rec11 (rec11) (Schizosaccharomyces pombe (strain 972 / ATCC 24843) (Fission yeast)).